Reading from the N-terminus, the 184-residue chain is Probable RNA 2'-phosphotransferase (184 aa).

The protein belongs to the KptA/TPT1 family.

Removes the 2'-phosphate from RNA via an intermediate in which the phosphate is ADP-ribosylated by NAD followed by a presumed transesterification to release the RNA and generate ADP-ribose 1''-2''-cyclic phosphate (APPR&gt;P). May function as an ADP-ribosylase. The protein is Probable RNA 2'-phosphotransferase of Escherichia coli (strain K12 / MC4100 / BW2952).